A 521-amino-acid polypeptide reads, in one-letter code: Bifunctional purine biosynthesis protein PurH (521 aa).

In terms of domain architecture, MGS-like spans 1–145 (MIKQALISVS…KNHKDVIVIC (145 aa)).

This sequence belongs to the PurH family.

The catalysed reaction is (6R)-10-formyltetrahydrofolate + 5-amino-1-(5-phospho-beta-D-ribosyl)imidazole-4-carboxamide = 5-formamido-1-(5-phospho-D-ribosyl)imidazole-4-carboxamide + (6S)-5,6,7,8-tetrahydrofolate. It carries out the reaction IMP + H2O = 5-formamido-1-(5-phospho-D-ribosyl)imidazole-4-carboxamide. Its pathway is purine metabolism; IMP biosynthesis via de novo pathway; 5-formamido-1-(5-phospho-D-ribosyl)imidazole-4-carboxamide from 5-amino-1-(5-phospho-D-ribosyl)imidazole-4-carboxamide (10-formyl THF route): step 1/1. It functions in the pathway purine metabolism; IMP biosynthesis via de novo pathway; IMP from 5-formamido-1-(5-phospho-D-ribosyl)imidazole-4-carboxamide: step 1/1. The chain is Bifunctional purine biosynthesis protein PurH from Janthinobacterium sp. (strain Marseille) (Minibacterium massiliensis).